The sequence spans 101 residues: Small ribosomal subunit protein uS14 (101 aa).

Belongs to the universal ribosomal protein uS14 family. Part of the 30S ribosomal subunit. Contacts proteins S3 and S10.

Functionally, binds 16S rRNA, required for the assembly of 30S particles and may also be responsible for determining the conformation of the 16S rRNA at the A site. The polypeptide is Small ribosomal subunit protein uS14 (Wigglesworthia glossinidia brevipalpis).